Consider the following 119-residue polypeptide: Large ribosomal subunit protein bL20 (119 aa).

The protein belongs to the bacterial ribosomal protein bL20 family.

Functionally, binds directly to 23S ribosomal RNA and is necessary for the in vitro assembly process of the 50S ribosomal subunit. It is not involved in the protein synthesizing functions of that subunit. The chain is Large ribosomal subunit protein bL20 from Bacillus velezensis (strain DSM 23117 / BGSC 10A6 / LMG 26770 / FZB42) (Bacillus amyloliquefaciens subsp. plantarum).